Reading from the N-terminus, the 819-residue chain is Advillin (819 aa).

Residues 1 to 731 (MSLSSAFRAV…YEQLKNELGD (731 aa)) are core. The stretch at 24-73 (MELALVPLSAHGNFYEGDCYIVLSTRRVGSLLSQNIHFWIGKDSSQDEQS) is one Gelsolin-like 1 repeat. Residue Tyr85 is modified to Phosphotyrosine. A 1,2-diacyl-sn-glycero-3-phospho-(1D-myo-inositol-4,5-bisphosphate) contacts are provided by residues 109–116 (KQGIIYKK) and 135–143 (RLLHVKGKR). Gelsolin-like repeat units follow at residues 145–185 (IQAT…GERL), 262–306 (LSVT…VEKQ), 403–454 (ENLE…DELA), 525–565 (TKAV…DERA), and 628–669 (FLVT…TEKK). The tract at residues 628–819 (FLVTEVTDFT…LQLKKERGLF (192 aa)) is required for interaction with F-actin. A headpiece region spans residues 732–819 (ATAIVRITAD…LQLKKERGLF (88 aa)). Phosphotyrosine occurs at positions 748 and 758. Residues 753–819 (DGEPKYYPVE…LQLKKERGLF (67 aa)) form the HP domain.

It belongs to the villin/gelsolin family. As to quaternary structure, associates (via C-terminus) with actin. Interacts with F-actin. Interacts with SCARF1; the interaction occurs in embryonic dorsal root ganglions at 18 dpc and induces neurite-like outgrowth. Interacts with PLCE1. Interacts with ACTR2 and ACTR3; associates with the ARP2/3 complex. As to expression, most highly expressed in the endometrium of the uterus, the intestinal villi and the testes. Weaker expression also detected in the brain, dorsal root ganglions and on the surface of the tongue.

It is found in the cytoplasm. The protein localises to the cytoskeleton. The protein resides in the cell projection. It localises to the lamellipodium. Its subcellular location is the cell junction. It is found in the focal adhesion. The protein localises to the neuron projection. The protein resides in the axon. In terms of biological role, ca(2+)-regulated actin-binding protein which plays an important role in actin bundling. May have a unique function in the morphogenesis of neuronal cells which form ganglia. Required for SREC1-mediated regulation of neurite-like outgrowth. Plays a role in regenerative sensory axon outgrowth and remodeling processes after peripheral injury in neonates. Involved in the formation of long fine actin-containing filopodia-like structures in fibroblast. Plays a role in ciliogenesis. In podocytes, controls lamellipodia formation through the regulation of EGF-induced diacylglycerol generation by PLCE1 and ARP2/3 complex assembly. The polypeptide is Advillin (Mus musculus (Mouse)).